The chain runs to 711 residues: Polyribonucleotide nucleotidyltransferase (711 aa).

Mg(2+)-binding residues include Asp490 and Asp496. Positions 557–619 (PRIETMTIPK…KCIDDAMRII (63 aa)) constitute a KH domain. The S1 motif domain occupies 629 to 699 (GEVYVGKVRS…KTGKFKLSHK (71 aa)).

It belongs to the polyribonucleotide nucleotidyltransferase family. Requires Mg(2+) as cofactor.

The protein resides in the cytoplasm. It catalyses the reaction RNA(n+1) + phosphate = RNA(n) + a ribonucleoside 5'-diphosphate. Functionally, involved in mRNA degradation. Catalyzes the phosphorolysis of single-stranded polyribonucleotides processively in the 3'- to 5'-direction. The chain is Polyribonucleotide nucleotidyltransferase from Phocaeicola vulgatus (strain ATCC 8482 / DSM 1447 / JCM 5826 / CCUG 4940 / NBRC 14291 / NCTC 11154) (Bacteroides vulgatus).